Reading from the N-terminus, the 190-residue chain is Small ribosomal subunit protein uS7 (190 aa).

T2 is modified (N-acetylthreonine).

It belongs to the universal ribosomal protein uS7 family. In terms of assembly, component of the small ribosomal subunit. Part of the small subunit (SSU) processome, composed of more than 70 proteins and the RNA chaperone small nucleolar RNA (snoRNA) U3.

Its subcellular location is the cytoplasm. It localises to the nucleus. The protein localises to the nucleolus. Functionally, component of the small ribosomal subunit. The ribosome is a large ribonucleoprotein complex responsible for the synthesis of proteins in the cell. Part of the small subunit (SSU) processome, first precursor of the small eukaryotic ribosomal subunit. During the assembly of the SSU processome in the nucleolus, many ribosome biogenesis factors, an RNA chaperone and ribosomal proteins associate with the nascent pre-rRNA and work in concert to generate RNA folding, modifications, rearrangements and cleavage as well as targeted degradation of pre-ribosomal RNA by the RNA exosome. The polypeptide is Small ribosomal subunit protein uS7 (rps5) (Dictyostelium discoideum (Social amoeba)).